The following is a 369-amino-acid chain: Cyclic AMP receptor-like protein A (369 aa).

Residues 1–4 are Extracellular-facing; the sequence is MIQI. The helical transmembrane segment at 5–22 threads the bilayer; the sequence is LLSTFISFIIIIVSSNDI. Residues 23–72 are Cytoplasmic-facing; the sequence is RSGENDNFNNNKMINNFLTTITTNDTIIIKETESPNDYDFSKEQIESLDK. A helical membrane pass occupies residues 73 to 93; it reads IVYFSSTMGIVGALFIIVSFF. Over 94–100 the chain is Extracellular; sequence LFKAART. The chain crosses the membrane as a helical span at residues 101–121; that stretch reads FATKMIFFLSLSDLFAAIFYL. The Cytoplasmic portion of the chain corresponds to 122 to 146; the sequence is PYYRDSDIMCNLQGMGLVFFLSSSY. A helical membrane pass occupies residues 147–167; sequence LWTMCISISLFMVFFTTIFEL. The Extracellular portion of the chain corresponds to 168–173; that stretch reads NHWFKY. Residues 174 to 194 form a helical membrane-spanning segment; sequence FHFICWGIPLFTAIISLIFHA. The Cytoplasmic portion of the chain corresponds to 195–212; sequence YGKTGSWCFISDPTSIFR. A helical membrane pass occupies residues 213–233; the sequence is LLYYLPLIVVFFINLVVFIAI. The Extracellular segment spans residues 234–247; that stretch reads RWKISQHSNSLVSR. A helical membrane pass occupies residues 248–268; the sequence is VNIIVSFYLIAFSLSQLPTII. Over 269-369 the chain is Cytoplasmic; it reads NSIQNFSDPD…KLIIDDYNRV (101 aa).

The protein belongs to the G-protein coupled receptor 5 family.

The protein resides in the membrane. Receptor for cAMP which may play a role in prestalk cell differentiation. May act as a negative regulator of cell growth. The polypeptide is Cyclic AMP receptor-like protein A (crlA) (Dictyostelium discoideum (Social amoeba)).